Consider the following 669-residue polypeptide: DNA mismatch repair protein MutL (669 aa).

The interval 356–377 is disordered; it reads FEQRQNTENNQEKTFSSEESNS. The segment covering 361–377 has biased composition (polar residues); that stretch reads NTENNQEKTFSSEESNS.

It belongs to the DNA mismatch repair MutL/HexB family.

This protein is involved in the repair of mismatches in DNA. It is required for dam-dependent methyl-directed DNA mismatch repair. May act as a 'molecular matchmaker', a protein that promotes the formation of a stable complex between two or more DNA-binding proteins in an ATP-dependent manner without itself being part of a final effector complex. In Staphylococcus aureus (strain MSSA476), this protein is DNA mismatch repair protein MutL.